The chain runs to 507 residues: Maturase K (507 aa).

This sequence belongs to the intron maturase 2 family. MatK subfamily.

The protein localises to the plastid. Its subcellular location is the chloroplast. Its function is as follows. Usually encoded in the trnK tRNA gene intron. Probably assists in splicing its own and other chloroplast group II introns. The protein is Maturase K of Kalmia procumbens (Alpine azalea).